Reading from the N-terminus, the 165-residue chain is Cystatin-like protein (165 aa).

The first 19 residues, 1-19 (MDVALKLLLLAALTLLASA), serve as a signal peptide directing secretion. Disulfide bonds link Cys80–Cys92 and Cys104–Cys118.

In terms of biological role, involved in hypoxia tolerance. The protein is Cystatin-like protein of Clarias batrachus (Walking catfish).